A 272-amino-acid chain; its full sequence is Protein FAM210A (272 aa).

A DUF1279 domain is found at 117–229; that stretch reads DKSISLYQRF…GYMSTPPPVK (113 aa). Residues 136 to 156 traverse the membrane as a helical segment; that stretch reads VLIPVHLITSGVWFGTFYYAA. Residues 229-271 are a coiled coil; the sequence is KEYLQDRMEETKELITEKMEETKDRLTEKLQETKEKVSFKKKV. The disordered stretch occupies residues 246–272; sequence KMEETKDRLTEKLQETKEKVSFKKKVE.

The protein belongs to the FAM210 family. Interacts with ATAD3A.

The protein resides in the membrane. Its subcellular location is the mitochondrion. It is found in the cytoplasm. May play a role in the structure and strength of both muscle and bone. This Homo sapiens (Human) protein is Protein FAM210A (FAM210A).